We begin with the raw amino-acid sequence, 552 residues long: MFCYQCSEASKGVGCTTIGVCGKTPDVANLQDLLIWLTRGISYWALKAKEYGVKDDEVNLFVAEALFSTITNVNFSAKRMVEFIERAFELRERIKHRFLEAYAEKEGKTFDEKVPEAAEWHKKGGVDLYELKGMEVGVLFDKDEDIRSLKQLLIYGLKGIAAYTDHAYILKHTNDDILYFIQKGLVETLREDITVDELVSLVLEAGKVAVDAMALLDKANTTEFGNPEITEVYTGTYNTPAILVSGHDLLDLEELLKQTEGTGIMVYTHGEMLPAHAYPKLKKYKHLAGNFGSAWWKQSEEFEEFGGAILMTTNCLVPPKESYKDRVFTTGLVGFDKLTHIPNRTDGKPKDFSPVIKKALELGPIPERKGKKIVIGFAHDQVSRLLDKVIDAVKSGAIKKFVVMGGCDGRHKEREYYTEFAKKLPKDTVILTAGCAKYRYNHLDLGDIGGIPRVLDAGQCNDSYSLVVTALKLKEALGLDDINDLPIVYNIAWYEQKAIAVLLALLYLGVKGIRLGPVLPAFISPNVLKVLVDKFNIAPITTVEEDLKVLLS.

4 residues coordinate [4Fe-4S] cluster: C3, C6, C15, and C21. The hybrid [4Fe-2O-2S] cluster site is built by H247, E271, C315, C407, C435, C460, E495, and K497. C407 is modified (cysteine persulfide).

This sequence belongs to the HCP family. [4Fe-4S] cluster is required as a cofactor. Requires hybrid [4Fe-2O-2S] cluster as cofactor.

It is found in the cytoplasm. The enzyme catalyses A + NH4(+) + H2O = hydroxylamine + AH2 + H(+). Its function is as follows. Catalyzes the reduction of hydroxylamine to form NH(3) and H(2)O. The sequence is that of Hydroxylamine reductase from Thermosipho melanesiensis (strain DSM 12029 / CIP 104789 / BI429).